Consider the following 538-residue polypeptide: Beta-1-syntrophin (538 aa).

N-acetylalanine is present on A2. PH domains are found at residues 19–298 (RAQR…SNVN) and 322–433 (EIRH…QGCH). Phosphoserine occurs at positions 87, 126, and 205. Residues 112–195 (GVKVLKQELG…EVLLEVKYMR (84 aa)) form the PDZ domain. The segment at 205-237 (SPVSEIGWETPPPESPRLGGSTSDPPSSQSFSF) is disordered. Residue T214 is modified to Phosphothreonine. Residues S219, S232, S236, and S389 each carry the phosphoserine modification. Residues 225–236 (STSDPPSSQSFS) are compositionally biased toward low complexity. In terms of domain architecture, SU spans 482-538 (PYEKLKMSSDDGIRMLYLDFGGKDGEIQLDLHSCPKPIVFIIHSFLSAKITRLGLVA). The calmodulin-binding stretch occupies residues 518–538 (PIVFIIHSFLSAKITRLGLVA).

Belongs to the syntrophin family. As to quaternary structure, monomer and homodimer. Interacts with the other members of the syntrophin family SNTA1 and SNTB2; with the sodium channel proteins SCN4A and SCN5A. Interacts with the viral HTLV-1 TAX protein and with dystrophin protein DMD and related proteins DTNA and UTRN. Interacts with DTNB. In terms of processing, phosphorylated by CaM-kinase II. In terms of tissue distribution, ubiquitous.

The protein resides in the cell membrane. It is found in the sarcolemma. The protein localises to the cell junction. It localises to the cytoplasm. Its subcellular location is the cytoskeleton. In terms of biological role, adapter protein that binds to and probably organizes the subcellular localization of a variety of membrane proteins. May link various receptors to the actin cytoskeleton and the dystrophin glycoprotein complex. This chain is Beta-1-syntrophin (SNTB1), found in Homo sapiens (Human).